We begin with the raw amino-acid sequence, 294 residues long: 4-hydroxy-tetrahydrodipicolinate synthase (294 aa).

Pyruvate is bound at residue Thr45. Tyr133 serves as the catalytic Proton donor/acceptor. Lys161 (schiff-base intermediate with substrate) is an active-site residue. Ile203 is a binding site for pyruvate.

It belongs to the DapA family. In terms of assembly, homotetramer; dimer of dimers.

It localises to the cytoplasm. It catalyses the reaction L-aspartate 4-semialdehyde + pyruvate = (2S,4S)-4-hydroxy-2,3,4,5-tetrahydrodipicolinate + H2O + H(+). Its pathway is amino-acid biosynthesis; L-lysine biosynthesis via DAP pathway; (S)-tetrahydrodipicolinate from L-aspartate: step 3/4. In terms of biological role, catalyzes the condensation of (S)-aspartate-beta-semialdehyde [(S)-ASA] and pyruvate to 4-hydroxy-tetrahydrodipicolinate (HTPA). The protein is 4-hydroxy-tetrahydrodipicolinate synthase of Buchnera aphidicola subsp. Baizongia pistaciae (strain Bp).